The following is a 250-amino-acid chain: Proteasome subunit alpha type-7 (250 aa).

This sequence belongs to the peptidase T1A family. The 26S proteasome consists of a 20S proteasome core and two 19S regulatory subunits. The 20S proteasome core is composed of 28 subunits that are arranged in four stacked rings, resulting in a barrel-shaped structure. The two end rings are each formed by seven alpha subunits, and the two central rings are each formed by seven beta subunits. The catalytic chamber with the active sites is on the inside of the barrel.

Its subcellular location is the cytoplasm. The protein localises to the nucleus. In terms of biological role, the proteasome is a multicatalytic proteinase complex which is characterized by its ability to cleave peptides with Arg, Phe, Tyr, Leu, and Glu adjacent to the leaving group at neutral or slightly basic pH. The proteasome has an ATP-dependent proteolytic activity. The chain is Proteasome subunit alpha type-7 (psmA7) from Dictyostelium discoideum (Social amoeba).